The chain runs to 485 residues: NADH-quinone oxidoreductase subunit N (485 aa).

14 consecutive transmembrane segments (helical) span residues 8 to 28 (LIALLPLLIVGLTVVVVMLSI), 35 to 55 (FLNATLSVIGLNAALVSLWFV), 71 to 91 (GFAMLYTGLVLLASLATCTFA), 105 to 125 (FYLLVLIAALGGILLANANHL), 127 to 147 (SLFLGIELISLPLFGLVGYAF), 159 to 179 (YTILSAAASSFLLFGMALVYA), 203 to 223 (LLAGFGLMIVGLGFKLSLVPF), 235 to 255 (PAPVSTFLATASKIVIFGVVM), 271 to 291 (VVLAIIAFASIIFGNLMALSQ), 297 to 317 (LLGYSSISHLGYLLVALIALQ), 326 to 346 (VGVYLAGYLFSSLGAFGVVSL), 373 to 393 (AAVMTVMMLSLAGIPMTLGFI), 408 to 430 (WWLVGAVVVGSAIGLYYYLRVAV), and 455 to 475 (IVVLISALLVLVLGVWPQPLI).

This sequence belongs to the complex I subunit 2 family. As to quaternary structure, NDH-1 is composed of 13 different subunits. Subunits NuoA, H, J, K, L, M, N constitute the membrane sector of the complex.

Its subcellular location is the cell inner membrane. It catalyses the reaction a quinone + NADH + 5 H(+)(in) = a quinol + NAD(+) + 4 H(+)(out). NDH-1 shuttles electrons from NADH, via FMN and iron-sulfur (Fe-S) centers, to quinones in the respiratory chain. The immediate electron acceptor for the enzyme in this species is believed to be ubiquinone. Couples the redox reaction to proton translocation (for every two electrons transferred, four hydrogen ions are translocated across the cytoplasmic membrane), and thus conserves the redox energy in a proton gradient. The chain is NADH-quinone oxidoreductase subunit N from Shigella dysenteriae serotype 1 (strain Sd197).